Here is a 318-residue protein sequence, read N- to C-terminus: Putative S-adenosyl-L-methionine-dependent methyltransferase BCG_0781c (318 aa).

Residues D135 and 164–165 (DL) each bind S-adenosyl-L-methionine.

The protein belongs to the UPF0677 family.

Functionally, exhibits S-adenosyl-L-methionine-dependent methyltransferase activity. The protein is Putative S-adenosyl-L-methionine-dependent methyltransferase BCG_0781c of Mycobacterium bovis (strain BCG / Pasteur 1173P2).